The sequence spans 350 residues: Meiotic driver wtf30 (350 aa).

Residues 1 to 92 form a disordered region; it reads MKNKYYPLRS…RENHSSGTTD (92 aa). Basic and acidic residues predominate over residues 11-29; that stretch reads SIDELSTKNDNEIDLEKGP. Polar residues predominate over residues 57 to 72; sequence GANNPNLFNTDESTTP. 7 helical membrane-spanning segments follow: residues 97–117, 134–154, 165–185, 190–210, 226–246, 253–273, and 280–300; these read FLIK…PAVC, WVYF…LWCF, CVKV…IGLF, EMMI…FVYI, CTIS…FWTF, LAKV…TMFL, and WTGC…LFLC.

Belongs to the WTF family. As to quaternary structure, homomer. Forms protein aggregates. The two isoforms can interact with each other and with themselves. High sequence similarity is required for their interaction.

It is found in the spore membrane. The protein resides in the vacuole membrane. Its subcellular location is the ascus epiplasm. It localises to the cytoplasm. The protein localises to the endoplasmic reticulum membrane. Promotes unequal transmission of alleles from the parental zygote to progeny spores by acting as poison/antidote system where the poison and antidote proteins are produced from the same locus; the poison component is trans-acting and targets all spores within an ascus whereas the antidote component is spore-specific, leading to poisoning of all progeny that do not inherit the allele. Functionally, localizes isoform 2 to the vacuole thereby facilitating its degradation. In terms of biological role, forms toxic aggregates that disrupt spore maturation. The sequence is that of Meiotic driver wtf30 from Schizosaccharomyces kambucha (Fission yeast).